The primary structure comprises 60 residues: Large ribosomal subunit protein bL32 (60 aa).

A disordered region spans residues 1-60 (MAVQQNKKSPSKRGMHRSHNALTVPGIAVEPTTGETHMRHHISPNGFYRGRQVLKNKSEA). Residues 9 to 19 (SPSKRGMHRSH) show a composition bias toward basic residues.

Belongs to the bacterial ribosomal protein bL32 family.

The chain is Large ribosomal subunit protein bL32 from Acidovorax ebreus (strain TPSY) (Diaphorobacter sp. (strain TPSY)).